Reading from the N-terminus, the 318-residue chain is Replication factor C small subunit (318 aa).

ATP is bound at residue 43 to 50 (GSVGTGKT).

The protein belongs to the activator 1 small subunits family. RfcS subfamily. As to quaternary structure, heteromultimer composed of small subunits (RfcS) and large subunits (RfcL).

In terms of biological role, part of the RFC clamp loader complex which loads the PCNA sliding clamp onto DNA. In Thermoplasma volcanium (strain ATCC 51530 / DSM 4299 / JCM 9571 / NBRC 15438 / GSS1), this protein is Replication factor C small subunit.